Here is a 239-residue protein sequence, read N- to C-terminus: Carboxy-S-adenosyl-L-methionine synthase (239 aa).

S-adenosyl-L-methionine-binding positions include Tyr-35, 64–66, 88–89, and Arg-195; these read GCS and DN.

Belongs to the class I-like SAM-binding methyltransferase superfamily. Cx-SAM synthase family. Homodimer.

It catalyses the reaction prephenate + S-adenosyl-L-methionine = carboxy-S-adenosyl-L-methionine + 3-phenylpyruvate + H2O. Catalyzes the conversion of S-adenosyl-L-methionine (SAM) to carboxy-S-adenosyl-L-methionine (Cx-SAM). The sequence is that of Carboxy-S-adenosyl-L-methionine synthase from Helicobacter pylori (strain G27).